The following is a 193-amino-acid chain: ATP-dependent Clp protease proteolytic subunit (193 aa).

Ser98 (nucleophile) is an active-site residue. His123 is a catalytic residue.

The protein belongs to the peptidase S14 family. As to quaternary structure, fourteen ClpP subunits assemble into 2 heptameric rings which stack back to back to give a disk-like structure with a central cavity, resembling the structure of eukaryotic proteasomes.

The protein localises to the cytoplasm. The catalysed reaction is Hydrolysis of proteins to small peptides in the presence of ATP and magnesium. alpha-casein is the usual test substrate. In the absence of ATP, only oligopeptides shorter than five residues are hydrolyzed (such as succinyl-Leu-Tyr-|-NHMec, and Leu-Tyr-Leu-|-Tyr-Trp, in which cleavage of the -Tyr-|-Leu- and -Tyr-|-Trp bonds also occurs).. Functionally, cleaves peptides in various proteins in a process that requires ATP hydrolysis. Has a chymotrypsin-like activity. Plays a major role in the degradation of misfolded proteins. The chain is ATP-dependent Clp protease proteolytic subunit from Haemophilus influenzae (strain PittEE).